The following is a 375-amino-acid chain: Aminomethyltransferase (375 aa).

The protein belongs to the GcvT family. As to quaternary structure, the glycine cleavage system is composed of four proteins: P, T, L and H.

The enzyme catalyses N(6)-[(R)-S(8)-aminomethyldihydrolipoyl]-L-lysyl-[protein] + (6S)-5,6,7,8-tetrahydrofolate = N(6)-[(R)-dihydrolipoyl]-L-lysyl-[protein] + (6R)-5,10-methylene-5,6,7,8-tetrahydrofolate + NH4(+). Functionally, the glycine cleavage system catalyzes the degradation of glycine. This chain is Aminomethyltransferase, found in Cupriavidus necator (strain ATCC 17699 / DSM 428 / KCTC 22496 / NCIMB 10442 / H16 / Stanier 337) (Ralstonia eutropha).